Here is a 571-residue protein sequence, read N- to C-terminus: Apolipoprotein N-acyltransferase (571 aa).

The next 6 membrane-spanning stretches (helical) occupy residues 13–33 (VVLWLSGPPFAIGPLVFIALV), 51–68 (LYAASLAYWLLSLQGLRY), 72–92 (LMFLPWIALSGYLAIYPVLFI), 118–138 (LVAAVVWVGLEWIRNYFFTGI), 152–172 (MLIQIADLGGTYAVSFVIVCV), and 199–219 (LVTAGGLLIATMVYGAMSMNA). In terms of domain architecture, CN hydrolase spans 234–527 (NELTVYEQDI…SDVIYAQPRR (294 aa)). Catalysis depends on glutamate 275, which acts as the Proton acceptor. The active site involves lysine 380. Cysteine 430 (nucleophile) is an active-site residue. Residues 542–562 (AGLMGAATLCGLAWMTFEWLM) traverse the membrane as a helical segment.

Belongs to the CN hydrolase family. Apolipoprotein N-acyltransferase subfamily.

It is found in the cell inner membrane. The catalysed reaction is N-terminal S-1,2-diacyl-sn-glyceryl-L-cysteinyl-[lipoprotein] + a glycerophospholipid = N-acyl-S-1,2-diacyl-sn-glyceryl-L-cysteinyl-[lipoprotein] + a 2-acyl-sn-glycero-3-phospholipid + H(+). It functions in the pathway protein modification; lipoprotein biosynthesis (N-acyl transfer). Functionally, catalyzes the phospholipid dependent N-acylation of the N-terminal cysteine of apolipoprotein, the last step in lipoprotein maturation. This Rhodopirellula baltica (strain DSM 10527 / NCIMB 13988 / SH1) protein is Apolipoprotein N-acyltransferase.